Consider the following 1081-residue polypeptide: DNA-directed RNA polymerase subunit beta (1081 aa).

The protein belongs to the RNA polymerase beta chain family. In terms of assembly, in plastids the minimal PEP RNA polymerase catalytic core is composed of four subunits: alpha, beta, beta', and beta''. When a (nuclear-encoded) sigma factor is associated with the core the holoenzyme is formed, which can initiate transcription.

The protein localises to the plastid. The protein resides in the chloroplast. It carries out the reaction RNA(n) + a ribonucleoside 5'-triphosphate = RNA(n+1) + diphosphate. In terms of biological role, DNA-dependent RNA polymerase catalyzes the transcription of DNA into RNA using the four ribonucleoside triphosphates as substrates. This Cyanidium caldarium (Red alga) protein is DNA-directed RNA polymerase subunit beta.